The primary structure comprises 231 residues: Large ribosomal subunit protein uL5m (231 aa).

Belongs to the universal ribosomal protein uL5 family.

Its subcellular location is the mitochondrion. This is Large ribosomal subunit protein uL5m (RPL5) from Prototheca wickerhamii.